Reading from the N-terminus, the 456-residue chain is Phospholipase A1 member A (456 aa).

The first 24 residues, 1–24, serve as a signal peptide directing secretion; sequence MCPGLWGTCFWLWGSLLWLSIGRS. The active-site Nucleophile is the serine 166. The active-site Charge relay system is aspartate 190. A disulfide bridge connects residues cysteine 245 and cysteine 258. Histidine 260 (charge relay system) is an active-site residue. 2 cysteine pairs are disulfide-bonded: cysteine 282/cysteine 293 and cysteine 296/cysteine 304. The N-linked (GlcNAc...) asparagine glycan is linked to asparagine 365.

It belongs to the AB hydrolase superfamily. Lipase family.

The protein localises to the secreted. The catalysed reaction is a 1,2-diacyl-sn-glycero-3-phospho-L-serine + H2O = a 2-acyl-sn-glycero-3-phospho-L-serine + a fatty acid + H(+). It catalyses the reaction 1,2-di-(9Z)-octadecenoyl-sn-glycero-3-phospho-L-serine + H2O = 2-(9Z-octadecenoyl)-sn-glycero-3-phospho-L-serine + (9Z)-octadecenoate + H(+). It carries out the reaction 1-hexadecanoyl-2-(5Z,8Z,11Z,14Z-eicosatetraenoyl)-sn-glycero-3-phospho-L-serine + H2O = 2-(5Z,8Z,11Z,14Z)-eicosatetraenoyl-sn-glycero-3-phospho-L-serine + hexadecanoate + H(+). The enzyme catalyses a 1-acyl-sn-glycero-3-phospho-L-serine + H2O = sn-glycero-3-phospho-L-serine + a fatty acid + H(+). The catalysed reaction is 1-(9Z-octadecenoyl)-sn-glycero-3-phospho-L-serine + H2O = sn-glycero-3-phospho-L-serine + (9Z)-octadecenoate + H(+). In terms of biological role, hydrolyzes the ester bond of the acyl group attached at the sn-1 position of phosphatidylserines (phospholipase A1 activity) and 1-acyl-2-lysophosphatidylserines (lysophospholipase activity) in the pathway of phosphatidylserines acyl chain remodeling. Cleaves phosphatidylserines exposed on the outer leaflet of the plasma membrane of apoptotic cells producing 2-acyl-1-lysophosphatidylserines, which in turn enhance mast cell activation and histamine production. Has no activity toward other glycerophospholipids including phosphatidylcholines, phosphatidylethanolamines, phosphatidic acids or phosphatidylinositols, or glycerolipids such as triolein. The polypeptide is Phospholipase A1 member A (Rattus norvegicus (Rat)).